A 525-amino-acid chain; its full sequence is MSDPVIKRALVSVSDKSGVVEFCRELSSMGVEIFSTGGTLRKLQESGVAAASISTITGFPEIMDGRVKTLHPKIHGGLLAVRDNADHIAQARDNGIGFIDMVVVNLYPFQETVAKPDVTFEEAIENIDIGGPSMLRSAAKNHESVTVITESADYRTVLDEMRENNGATTRSTRLKLAGKVFTLTSRYDRAIADYLAASSEGEASSEAGSISVRLEKEIDMRYGENPHQNAGFYRMDDGSGSRSFEEYFRKLHGKDLSYNNMLDTAAATALIEEFRDEAPAVVIIKHTNPCGVAQADTLVEAYRKAFSTDTQSPFGGIIACNRPLDMETAKAIDEIFTEILIAPAYEEGVLDMLMKKKNRRLLLQRKPLLQEVTEYKSTRFGMLVQERDSRIASRDDLKVVTKRQPSAQELDDLMFAWKICKHVKSNTIVYVKNRQTVGVGAGQMSRVDSAKIARSKAAEAGLDLNGSAVASDAFFPFADGLLAAAEAGAMAVIQPGGSVRDDEVIAAADEHDLAMVFTSMRHFKH.

In terms of domain architecture, MGS-like spans 1–149 (MSDPVIKRAL…KNHESVTVIT (149 aa)).

This sequence belongs to the PurH family.

It carries out the reaction (6R)-10-formyltetrahydrofolate + 5-amino-1-(5-phospho-beta-D-ribosyl)imidazole-4-carboxamide = 5-formamido-1-(5-phospho-D-ribosyl)imidazole-4-carboxamide + (6S)-5,6,7,8-tetrahydrofolate. The catalysed reaction is IMP + H2O = 5-formamido-1-(5-phospho-D-ribosyl)imidazole-4-carboxamide. It participates in purine metabolism; IMP biosynthesis via de novo pathway; 5-formamido-1-(5-phospho-D-ribosyl)imidazole-4-carboxamide from 5-amino-1-(5-phospho-D-ribosyl)imidazole-4-carboxamide (10-formyl THF route): step 1/1. The protein operates within purine metabolism; IMP biosynthesis via de novo pathway; IMP from 5-formamido-1-(5-phospho-D-ribosyl)imidazole-4-carboxamide: step 1/1. The chain is Bifunctional purine biosynthesis protein PurH from Chlorobium phaeobacteroides (strain BS1).